Reading from the N-terminus, the 552-residue chain is Lysine--tRNA ligase (552 aa).

Positions 72–80 (PSGLPHLGT) match the 'HIGH' region motif. A 'KMSKS' region motif is present at residues 320 to 324 (KISKS). K323 is an ATP binding site.

This sequence belongs to the class-I aminoacyl-tRNA synthetase family.

It localises to the cytoplasm. The enzyme catalyses tRNA(Lys) + L-lysine + ATP = L-lysyl-tRNA(Lys) + AMP + diphosphate. The protein is Lysine--tRNA ligase of Caulobacter vibrioides (strain ATCC 19089 / CIP 103742 / CB 15) (Caulobacter crescentus).